The chain runs to 176 residues: L-2,4-diaminobutyric acid acetyltransferase (176 aa).

Residues 16 to 171 (LSIDAPRVED…THLPEVLYRI (156 aa)) form the N-acetyltransferase domain.

The protein belongs to the acetyltransferase family. EctA subfamily.

The catalysed reaction is L-2,4-diaminobutanoate + acetyl-CoA = (2S)-4-acetamido-2-aminobutanoate + CoA + H(+). It functions in the pathway amine and polyamine biosynthesis; ectoine biosynthesis; L-ectoine from L-aspartate 4-semialdehyde: step 2/3. Catalyzes the acetylation of L-2,4-diaminobutyrate (DABA) to gamma-N-acetyl-alpha,gamma-diaminobutyric acid (ADABA) with acetyl coenzyme A. The chain is L-2,4-diaminobutyric acid acetyltransferase (ectA) from Streptomyces anulatus (Streptomyces chrysomallus).